The chain runs to 340 residues: Ribonucleoside-diphosphate reductase small subunit (340 aa).

Positions 94, 124, and 127 each coordinate Fe cation. Tyr-131 is a catalytic residue. The helical transmembrane segment at 180-200 (FILMILIEGIFFAASFAAIAY) threads the bilayer. Fe cation contacts are provided by Glu-187, Glu-221, and His-224.

Belongs to the ribonucleoside diphosphate reductase small chain family. Heterotetramer composed of a homodimer of the large subunit (R1) and a homodimer of the small subunit (R2). Larger multisubunit protein complex are also active, composed of (R1)n(R2)n. Fe cation is required as a cofactor.

The protein localises to the host membrane. The catalysed reaction is a 2'-deoxyribonucleoside 5'-diphosphate + [thioredoxin]-disulfide + H2O = a ribonucleoside 5'-diphosphate + [thioredoxin]-dithiol. Ribonucleoside-diphosphate reductase holoenzyme provides the precursors necessary for viral DNA synthesis. Allows virus growth in non-dividing cells, as well as reactivation from latency in infected hosts. Catalyzes the biosynthesis of deoxyribonucleotides from the corresponding ribonucleotides. In Human herpesvirus 1 (strain KOS) (HHV-1), this protein is Ribonucleoside-diphosphate reductase small subunit.